The primary structure comprises 410 residues: Mannosyl phosphorylinositol ceramide synthase regulatory protein CSG2 (410 aa).

Positions 1–17 are cleaved as a signal peptide; sequence MSTTLLWFSSVIGYVIQ. Over 18–50 the chain is Lumenal; sequence TKCLSNIQSKKEISVGPNGTIATPETNGDNGNS. N-linked (GlcNAc...) asparagine glycans are attached at residues N35 and N49. The helical transmembrane segment at 51-71 threads the bilayer; that stretch reads SSLTFYLTFMYFASWLLLVPA. Topologically, residues 72-141 are cytoplasmic; it reads SRLWEKMRPM…SVATFKYVAK (70 aa). A helical transmembrane segment spans residues 142 to 161; it reads LTVLALIMIVADLTYNMALS. The Lumenal portion of the chain corresponds to 162 to 167; sequence LSPAFD. A helical transmembrane segment spans residues 168-187; the sequence is VALMQNTAIFEIVTLLYGVC. The Cytoplasmic portion of the chain corresponds to 188 to 197; that stretch reads GISRKNYVFR. The chain crosses the membrane as a helical span at residues 198–217; sequence NFLIMMNAVIGILIISYTKA. At 218–245 the chain is on the lumenal side; the sequence is TCDMLAGKLSVNPNTGELSDPFLFDRLK. Residues 246–265 traverse the membrane as a helical segment; the sequence is GALICGLGALIMGPFAVLWN. Over 266–285 the chain is Cytoplasmic; that stretch reads RWFCSNISKNENSAVVLVKQ. Residues 286-305 traverse the membrane as a helical segment; that stretch reads STHMALIGIIGMVILLPFIP. The Lumenal portion of the chain corresponds to 306–324; the sequence is KFPSRESVESISLFYNDKS. A helical membrane pass occupies residues 325–344; that stretch reads FWFSLLGSIIFGSLPSLISI. The Cytoplasmic portion of the chain corresponds to 345–355; the sequence is LELNRKAPAEY. Residues 356–374 traverse the membrane as a helical segment; it reads LTTCNLGAIIFMGLAEWVC. Residues 375–385 are Lumenal-facing; it reads EPTQTTIVRWE. Residues 386 to 404 traverse the membrane as a helical segment; sequence VIGYIMLTVSLLVLSVTLG. At 405–410 the chain is on the cytoplasmic side; that stretch reads EGKYHH.

Heterodimer of CSH1 and CSG2, and SUR1 and CSG2.

The protein localises to the endoplasmic reticulum membrane. Its function is as follows. Required for calcium regulation. May regulate calcium accumulation by a non-vacuole organelle. Also regulates the activity of CSH1 and SUR1 during mannosyl phosphorylinositol ceramide synthesis. The polypeptide is Mannosyl phosphorylinositol ceramide synthase regulatory protein CSG2 (CSG2) (Saccharomyces cerevisiae (strain ATCC 204508 / S288c) (Baker's yeast)).